The following is a 435-amino-acid chain: ATP-dependent RNA helicase RhlB (435 aa).

Positions 9-37 match the Q motif motif; sequence QKFADLGLNPQVVEGLEKKGFEFCTPIQA. The region spanning 40-219 is the Helicase ATP-binding domain; it reads LPVLLSGQDI…FEHMHNPEHV (180 aa). An ATP-binding site is contributed by 53–60; sequence AQTGTGKT. Residues 165–168 carry the DEAD box motif; sequence DEAD. Positions 245 to 390 constitute a Helicase C-terminal domain; sequence ALLQTLIEEE…VSDYDSSALI (146 aa). Residues 395-435 are disordered; sequence APVRTPSARNQQRRTNTGGARSGDRKSNNRRPRQPRQHKEA. The span at 401-413 shows a compositional bias: polar residues; sequence SARNQQRRTNTGG. Over residues 422–435 the composition is skewed to basic residues; it reads NNRRPRQPRQHKEA.

It belongs to the DEAD box helicase family. RhlB subfamily. Component of the RNA degradosome, which is a multiprotein complex involved in RNA processing and mRNA degradation.

Its subcellular location is the cytoplasm. It catalyses the reaction ATP + H2O = ADP + phosphate + H(+). Its function is as follows. DEAD-box RNA helicase involved in RNA degradation. Has RNA-dependent ATPase activity and unwinds double-stranded RNA. This is ATP-dependent RNA helicase RhlB from Vibrio vulnificus (strain YJ016).